The sequence spans 20 residues: Protein C activator (20 aa).

In terms of domain architecture, Peptidase S1 spans 1-20 (VVGGDECNINEHRSLALMYA).

It belongs to the peptidase S1 family. Snake venom subfamily. In terms of assembly, monomer. In terms of processing, glycosylated. In terms of tissue distribution, expressed by the venom gland.

It is found in the secreted. Its activity is regulated as follows. Inhibited by calcium. Its function is as follows. Snake venom serine protease that selectively cleaves the heavy chain of protein C (PROC). This activation is thrombomodulin-independent. In Agkistrodon bilineatus (Cantil), this protein is Protein C activator.